The following is a 1388-amino-acid chain: Kinesin-like protein KIF15-A (1388 aa).

A Kinesin motor domain is found at 26–364 (AIKVFVRIRP…LQFAQRAKLI (339 aa)). 110-117 (GQTGSGKT) lines the ATP pocket. Positions 369–1383 (VVNEDTQGNV…ENLFLKESKK (1015 aa)) form a coiled coil. Residues 1127 to 1156 (EQEKIRPASSNSSSPVVLPETPRTPEGNPY) form a disordered region. The tract at residues 1139–1388 (SSPVVLPETP…KESKKCEHCN (250 aa)) is necessary for its targeting to microtubule minus ends.

This sequence belongs to the TRAFAC class myosin-kinesin ATPase superfamily. Kinesin family. KLP2 subfamily. In terms of assembly, homodimer. Dimerization is required for targeting to microtubule minus ends. Found in a complex with tpx2 and microtubules. Its association with microtubules and targeting to microtubule minus ends requires tpx2. As to expression, strongly expressed in testis and weakly in lung (at protein level).

The protein resides in the cytoplasm. It localises to the cytoskeleton. Its subcellular location is the microtubule organizing center. It is found in the centrosome. The protein localises to the spindle. The protein resides in the spindle pole. In terms of biological role, plus-end directed kinesin-like motor enzyme involved in mitotic spindle assembly. Required for centrosome separation and maintenance of spindle bipolarity during mitosis. The chain is Kinesin-like protein KIF15-A (kif15-a) from Xenopus laevis (African clawed frog).